The primary structure comprises 240 residues: Glutathione S-transferase theta-1 (240 aa).

Positions 2–82 constitute a GST N-terminal domain; sequence GLELYLDLLS…YLTRKYKVPD (81 aa). Residues His40, 53–54, and 66–67 each bind glutathione; these read KV and ES. The GST C-terminal domain occupies 88–220; that stretch reads DLQARARVDE…HEVILKAKDF (133 aa).

Belongs to the GST superfamily. Theta family. In terms of assembly, homodimer. As to expression, found in erythrocyte. Expressed at low levels in liver. In lung, expressed at low levels in club cells and ciliated cells at the alveolar/bronchiolar junction. Absent from epithelial cells of larger bronchioles.

Its subcellular location is the cytoplasm. It carries out the reaction RX + glutathione = an S-substituted glutathione + a halide anion + H(+). Conjugation of reduced glutathione to a wide number of exogenous and endogenous hydrophobic electrophiles. Acts on 1,2-epoxy-3-(4-nitrophenoxy)propane, phenethylisothiocyanate 4-nitrobenzyl chloride and 4-nitrophenethyl bromide. Displays glutathione peroxidase activity with cumene hydroperoxide. This is Glutathione S-transferase theta-1 (GSTT1) from Homo sapiens (Human).